The chain runs to 310 residues: Ribosomal RNA large subunit methyltransferase F (310 aa).

It belongs to the methyltransferase superfamily. METTL16/RlmF family.

It localises to the cytoplasm. The enzyme catalyses adenosine(1618) in 23S rRNA + S-adenosyl-L-methionine = N(6)-methyladenosine(1618) in 23S rRNA + S-adenosyl-L-homocysteine + H(+). Its function is as follows. Specifically methylates the adenine in position 1618 of 23S rRNA. In Psychromonas ingrahamii (strain DSM 17664 / CCUG 51855 / 37), this protein is Ribosomal RNA large subunit methyltransferase F.